The chain runs to 297 residues: N-acetylmuramic acid 6-phosphate etherase (297 aa).

The SIS domain occupies 56 to 219 (AIEAFNKGGR…STISMIGIGK (164 aa)). Catalysis depends on E84, which acts as the Proton donor. E115 is a catalytic residue.

It belongs to the GCKR-like family. MurNAc-6-P etherase subfamily. In terms of assembly, homodimer.

It catalyses the reaction N-acetyl-D-muramate 6-phosphate + H2O = N-acetyl-D-glucosamine 6-phosphate + (R)-lactate. The protein operates within amino-sugar metabolism; N-acetylmuramate degradation. Functionally, specifically catalyzes the cleavage of the D-lactyl ether substituent of MurNAc 6-phosphate, producing GlcNAc 6-phosphate and D-lactate. The chain is N-acetylmuramic acid 6-phosphate etherase from Lactococcus lactis subsp. cremoris (strain SK11).